Reading from the N-terminus, the 293-residue chain is Ribosomal protein L11 methyltransferase (293 aa).

S-adenosyl-L-methionine contacts are provided by T145, G166, D188, and N230.

Belongs to the methyltransferase superfamily. PrmA family.

Its subcellular location is the cytoplasm. The enzyme catalyses L-lysyl-[protein] + 3 S-adenosyl-L-methionine = N(6),N(6),N(6)-trimethyl-L-lysyl-[protein] + 3 S-adenosyl-L-homocysteine + 3 H(+). Its function is as follows. Methylates ribosomal protein L11. The chain is Ribosomal protein L11 methyltransferase from Actinobacillus pleuropneumoniae serotype 7 (strain AP76).